A 513-amino-acid chain; its full sequence is Maturase K (513 aa).

The protein belongs to the intron maturase 2 family. MatK subfamily.

Its subcellular location is the plastid. It localises to the chloroplast. In terms of biological role, usually encoded in the trnK tRNA gene intron. Probably assists in splicing its own and other chloroplast group II introns. In Astrebla lappacea (Curly Mitchell grass), this protein is Maturase K.